Consider the following 370-residue polypeptide: Vasopressin V2 receptor (370 aa).

Positions 1–10 are enriched in polar residues; sequence MLLASTTSAV. The disordered stretch occupies residues 1–26; that stretch reads MLLASTTSAVPRTLSPPTPAGNGSRE. The Extracellular segment spans residues 1-37; the sequence is MLLASTTSAVPRTLSPPTPAGNGSRELLDTRDPLLVQ. An N-linked (GlcNAc...) asparagine glycan is attached at N22. The chain crosses the membrane as a helical span at residues 38 to 62; the sequence is AELALLSTVFVAVALSNGLVLGALA. Residues 63–76 are Cytoplasmic-facing; it reads RRVRRGRWAPMHVF. A helical membrane pass occupies residues 77–97; that stretch reads IGHLCLADLAVALFQVLPQLA. Residues 98 to 112 are Extracellular-facing; sequence WDATDRFRGPDALCR. Residues 113-134 traverse the membrane as a helical segment; the sequence is AVKYLQMVGMYASSYMILAMTL. The Cytoplasmic portion of the chain corresponds to 135 to 158; the sequence is DRHRAICRPMLAYRHGGGARWNRP. Residues 159–179 traverse the membrane as a helical segment; that stretch reads VLVAWAFSLILSLPQLFIFAQ. Residues 180–199 lie on the Extracellular side of the membrane; sequence RDVGNGSGVLDCWAHFAEPW. A helical transmembrane segment spans residues 200-219; sequence GLRAYVTWIALMVFVAPALG. Residues 220 to 270 lie on the Cytoplasmic side of the membrane; sequence IAACQVLIFREIHSSLVPGPAERAGGCRGGHRTGSPSEGARVSAAMAKTVR. Residues 271-292 form a helical membrane-spanning segment; the sequence is MTLVIVIVYVLCWAPFFLVQLW. Topologically, residues 293-307 are extracellular; it reads AAWDPQAPLEGAPFV. A helical transmembrane segment spans residues 308-327; sequence LLMLLASLNSCTNPWIYAFF. Residues 328–370 are Cytoplasmic-facing; it reads SSSVSSELRSLFCWARSRAPPSLGPQEESCATASSFLAKDTSS. A lipid anchor (S-palmitoyl cysteine) is attached at C340.

The protein belongs to the G-protein coupled receptor 1 family. Vasopressin/oxytocin receptor subfamily. Interacts with ARRDC4. Identified in a complex containing at least ARRDC4, V2R and HGS. Interacts with TMEM147.

It localises to the cell membrane. Receptor for arginine vasopressin. The activity of this receptor is mediated by G proteins which activate adenylate cyclase. Involved in renal water reabsorption. This chain is Vasopressin V2 receptor (AVPR2), found in Canis lupus familiaris (Dog).